A 116-amino-acid polypeptide reads, in one-letter code: uncharacterized protein (116 aa).

The interval 77–116 is disordered; sequence SATSHYPKADDPQRFARSVSRGPSRVRRPARNSASRPVRR.

This is an uncharacterized protein from Frog virus 3 (isolate Goorha) (FV-3).